A 255-amino-acid polypeptide reads, in one-letter code: uncharacterized protein (255 aa).

2 N-linked (GlcNAc...) asparagine; by host glycosylation sites follow: asparagine 16 and asparagine 58. 2 helical membrane passes run 72–92 and 104–124; these read LIYS…TIYY and LWYI…SHIC.

The protein localises to the membrane. This is an uncharacterized protein from Acanthamoeba polyphaga (Amoeba).